The sequence spans 303 residues: Serine/threonine-protein phosphatase PP-X homolog 2 (303 aa).

Asp51, His53, Asp79, and Asn111 together coordinate Mn(2+). Catalysis depends on His112, which acts as the Proton donor. Residues His161 and His235 each contribute to the Mn(2+) site.

It belongs to the PPP phosphatase family. PP-4 (PP-X) subfamily. Mn(2+) serves as cofactor.

It catalyses the reaction O-phospho-L-seryl-[protein] + H2O = L-seryl-[protein] + phosphate. The catalysed reaction is O-phospho-L-threonyl-[protein] + H2O = L-threonyl-[protein] + phosphate. The chain is Serine/threonine-protein phosphatase PP-X homolog 2 (Ppx2) from Paramecium tetraurelia.